We begin with the raw amino-acid sequence, 189 residues long: Movement protein (189 aa).

This sequence belongs to the tombusvirus/aureusvirus movement protein p22 family.

The protein localises to the host membrane. Its function is as follows. Transports viral genome to neighboring plant cells directly through plasmosdesmata, without any budding. The movement protein allows efficient cell to cell propagation, by bypassing the host cell wall barrier. The polypeptide is Movement protein (Cymbidium ringspot virus (CymRSV)).